The primary structure comprises 75 residues: Small ribosomal subunit protein bS16 (75 aa).

Belongs to the bacterial ribosomal protein bS16 family.

The polypeptide is Small ribosomal subunit protein bS16 (Helicobacter pylori (strain G27)).